The primary structure comprises 740 residues: Probable type IV piliation system protein DR_0774 (740 aa).

Residues 1 to 20 (MNKRHALLLTAVLGMATAYA) form the signal peptide.

This sequence belongs to the bacterial secretin family.

It localises to the cell envelope. Functionally, could be part of the type IV piliation system (T4P). May contribute at the cohesion between the S-layer and the outer membrane by forming oligomers. Could also be the main channel through which trafficking is managed. This chain is Probable type IV piliation system protein DR_0774, found in Deinococcus radiodurans (strain ATCC 13939 / DSM 20539 / JCM 16871 / CCUG 27074 / LMG 4051 / NBRC 15346 / NCIMB 9279 / VKM B-1422 / R1).